A 511-amino-acid polypeptide reads, in one-letter code: Probable pectinesterase/pectinesterase inhibitor 17 (511 aa).

The N-terminal stretch at 1–23 is a signal peptide; it reads MMAFRAYIINFVILCILVASTVS. The interval 24–171 is pectinesterase inhibitor 17; that stretch reads GYNQKDVKAW…SNLLCNTLAI (148 aa). N112 and N160 each carry an N-linked (GlcNAc...) asparagine glycan. The segment at 237–414 is pectinesterase 17; that stretch reads VKQGVYSENL…LRPVLGSTKT (178 aa). Substrate is bound by residues T277 and Q307. Residue D330 is the Proton donor; for pectinesterase activity of the active site. C344 and C364 are disulfide-bonded. The Nucleophile; for pectinesterase activity role is filled by D351. Positions 418 and 420 each coordinate substrate.

This sequence in the N-terminal section; belongs to the PMEI family. The protein in the C-terminal section; belongs to the pectinesterase family. Expressed in siliques.

Its subcellular location is the secreted. The protein resides in the cell wall. It carries out the reaction [(1-&gt;4)-alpha-D-galacturonosyl methyl ester](n) + n H2O = [(1-&gt;4)-alpha-D-galacturonosyl](n) + n methanol + n H(+). The protein operates within glycan metabolism; pectin degradation; 2-dehydro-3-deoxy-D-gluconate from pectin: step 1/5. In terms of biological role, acts in the modification of cell walls via demethylesterification of cell wall pectin. The sequence is that of Probable pectinesterase/pectinesterase inhibitor 17 (PME17) from Arabidopsis thaliana (Mouse-ear cress).